A 366-amino-acid polypeptide reads, in one-letter code: Cytochrome c peroxidase, mitochondrial (366 aa).

His-123 serves as the catalytic Proton acceptor. A compositionally biased stretch (basic and acidic residues) spans 195–206 (IEWRPGRVDDNT). Positions 195–218 (IEWRPGRVDDNTASKVPPNGRLPD) are disordered. His-247 is a binding site for heme b. Residue Trp-263 is the Tryptophan radical intermediate of the active site.

This sequence belongs to the peroxidase family. Cytochrome c peroxidase subfamily. As to quaternary structure, forms a one-to-one complex with cytochrome c. The cofactor is heme b.

The protein localises to the mitochondrion matrix. The protein resides in the mitochondrion intermembrane space. The enzyme catalyses 2 Fe(II)-[cytochrome c] + H2O2 + 2 H(+) = 2 Fe(III)-[cytochrome c] + 2 H2O. In terms of biological role, destroys radicals which are normally produced within the cells and which are toxic to biological systems. This is Cytochrome c peroxidase, mitochondrial (CCP1) from Candida albicans (strain SC5314 / ATCC MYA-2876) (Yeast).